We begin with the raw amino-acid sequence, 549 residues long: Speedy protein E3 (549 aa).

Over residues 1–15 the composition is skewed to low complexity; the sequence is MTSHQPQPQEEQSPQ. 5 disordered regions span residues 1 to 74, 126 to 145, 188 to 218, 261 to 291, and 334 to 364; these read MTSH…EPEE, KREC…APEP, and SPPR…APEP. Acidic residues-rich tracts occupy residues 58 to 74, 131 to 145, 204 to 218, 277 to 291, and 350 to 364; these read DESD…EPEE and DESD…APEP.

This sequence belongs to the Speedy/Ringo family. Predominantly expressed in testis and spleen.

The protein is Speedy protein E3 of Homo sapiens (Human).